The following is a 358-amino-acid chain: Protein RecA (358 aa).

Residue 66–73 (GPESSGKT) participates in ATP binding.

This sequence belongs to the RecA family.

The protein localises to the cytoplasm. Can catalyze the hydrolysis of ATP in the presence of single-stranded DNA, the ATP-dependent uptake of single-stranded DNA by duplex DNA, and the ATP-dependent hybridization of homologous single-stranded DNAs. It interacts with LexA causing its activation and leading to its autocatalytic cleavage. The chain is Protein RecA from Herpetosiphon aurantiacus (strain ATCC 23779 / DSM 785 / 114-95).